We begin with the raw amino-acid sequence, 816 residues long: Phosphatidylinositol 4-kinase beta (816 aa).

Disordered regions lie at residues 1-30 (MGDT…GSLL), 101-120 (EDEM…RRRR), and 248-318 (AHRK…SFSS). At G2 the chain carries N-acetylglycine. Residues 2 to 68 (GDTIVEPAPL…VKLLHGGVAI (67 aa)) form an interaction with ACBD3 region. In terms of domain architecture, PIK helical spans 29–242 (LLSVITEGVG…GTKLRKLILS (214 aa)). The residue at position 258 (S258) is a Phosphoserine. A Phosphothreonine modification is found at T263. Phosphoserine occurs at positions 266, 275, 277, 284, and 294. Composition is skewed to polar residues over residues 278–297 (DATA…SNPK) and 306–318 (SSST…SFSS). Position 428 is a phosphoserine (S428). Phosphothreonine is present on T438. Phosphoserine is present on S511. Phosphothreonine occurs at positions 517 and 519. The region spanning 535 to 801 (EPWQEKVRRI…MVDGSMRSIT (267 aa)) is the PI3K/PI4K catalytic domain. The G-loop stretch occupies residues 541–547 (VRRIREG). Positions 668–676 (QVKDRHNGN) are catalytic loop. Positions 687–711 (HIDFGFILSSSPRNLGFETSAFKLT) are activation loop.

Belongs to the PI3/PI4-kinase family. Type III PI4K subfamily. In terms of assembly, interacts with ARF1 and ARF3 in the Golgi complex, but not with ARF4, ARF5 or ARF6. Interacts with NCS1/FREQ in a calcium-independent manner. Interacts with CALN1/CABP8 and CALN2/CABP7; in a calcium-dependent manner; this interaction competes with NCS1/FREQ binding. Interacts with ACBD3. Interacts with ARMH3, YWHAB, YWHAE, YWHAG, YWHAH, YWHAQ, YWHAZ and SFN. Interacts with GGA2 (via VHS domain); the interaction is important for PI4KB location at the Golgi apparatus membrane. Interacts with ATG9A. Requires Mg(2+) as cofactor. Mn(2+) serves as cofactor.

It is found in the endomembrane system. The protein localises to the mitochondrion outer membrane. The protein resides in the rough endoplasmic reticulum membrane. It localises to the golgi apparatus. Its subcellular location is the golgi apparatus membrane. The catalysed reaction is a 1,2-diacyl-sn-glycero-3-phospho-(1D-myo-inositol) + ATP = a 1,2-diacyl-sn-glycero-3-phospho-(1D-myo-inositol 4-phosphate) + ADP + H(+). With respect to regulation, inhibited by wortmannin. Increased kinase activity upon interaction with NCS1/FREQ. Its function is as follows. Phosphorylates phosphatidylinositol (PI) in the first committed step in the production of the second messenger inositol-1,4,5,-trisphosphate (PIP). May regulate Golgi disintegration/reorganization during mitosis, possibly via its phosphorylation. Involved in Golgi-to-plasma membrane trafficking. The polypeptide is Phosphatidylinositol 4-kinase beta (PI4KB) (Bos taurus (Bovine)).